A 310-amino-acid polypeptide reads, in one-letter code: Cysteine synthase (310 aa).

K46 is subject to N6-(pyridoxal phosphate)lysine. Pyridoxal 5'-phosphate-binding positions include N76, 180 to 184 (GTGGT), and S268.

Belongs to the cysteine synthase/cystathionine beta-synthase family. Homodimer. Pyridoxal 5'-phosphate serves as cofactor.

It catalyses the reaction O-acetyl-L-serine + hydrogen sulfide = L-cysteine + acetate. It functions in the pathway amino-acid biosynthesis; L-cysteine biosynthesis; L-cysteine from L-serine: step 2/2. This Staphylococcus epidermidis (strain ATCC 35984 / DSM 28319 / BCRC 17069 / CCUG 31568 / BM 3577 / RP62A) protein is Cysteine synthase (cysK).